The following is a 223-amino-acid chain: 2-C-methyl-D-erythritol 4-phosphate cytidylyltransferase (223 aa).

This sequence belongs to the IspD/TarI cytidylyltransferase family. IspD subfamily.

The enzyme catalyses 2-C-methyl-D-erythritol 4-phosphate + CTP + H(+) = 4-CDP-2-C-methyl-D-erythritol + diphosphate. Its pathway is isoprenoid biosynthesis; isopentenyl diphosphate biosynthesis via DXP pathway; isopentenyl diphosphate from 1-deoxy-D-xylulose 5-phosphate: step 2/6. Catalyzes the formation of 4-diphosphocytidyl-2-C-methyl-D-erythritol from CTP and 2-C-methyl-D-erythritol 4-phosphate (MEP). The polypeptide is 2-C-methyl-D-erythritol 4-phosphate cytidylyltransferase (Prochlorococcus marinus (strain MIT 9515)).